The sequence spans 255 residues: Gene 54 protein (255 aa).

The polypeptide is Gene 54 protein (54) (Mycobacterium (Mycobacteriophage L5)).